Consider the following 407-residue polypeptide: Substance-P receptor (407 aa).

At M1–Q31 the chain is on the extracellular side. N14 and N18 each carry an N-linked (GlcNAc...) asparagine glycan. The helical transmembrane segment at I32 to M54 threads the bilayer. Topologically, residues W55–R64 are cytoplasmic. The helical transmembrane segment at T65 to T86 threads the bilayer. Residues V87–K106 lie on the Extracellular side of the membrane. C105 and C180 are disulfide-bonded. A helical transmembrane segment spans residues F107 to F128. Over D129–K148 the chain is Cytoplasmic. A helical membrane pass occupies residues V149–S169. The Extracellular segment spans residues T170 to K194. The helical transmembrane segment at V195 to V219 threads the bilayer. The Cytoplasmic segment spans residues G220–K248. A helical membrane pass occupies residues M249–L270. The Extracellular segment spans residues P271–I283. A helical transmembrane segment spans residues Q284–L308. Residues N309 to S407 are Cytoplasmic-facing. Residue C322 is the site of S-palmitoyl cysteine attachment. The disordered stretch occupies residues H365–T394. A compositionally biased stretch (polar residues) spans T375–T394.

It belongs to the G-protein coupled receptor 1 family. Interacts with ARRB1.

It localises to the cell membrane. In terms of biological role, this is a receptor for the tachykinin neuropeptide substance P. It is probably associated with G proteins that activate a phosphatidylinositol-calcium second messenger system. The polypeptide is Substance-P receptor (TACR1) (Canis lupus familiaris (Dog)).